The chain runs to 234 residues: Probable transcriptional regulatory protein PFL_3960 (234 aa).

Belongs to the TACO1 family.

It is found in the cytoplasm. This is Probable transcriptional regulatory protein PFL_3960 from Pseudomonas fluorescens (strain ATCC BAA-477 / NRRL B-23932 / Pf-5).